A 148-amino-acid polypeptide reads, in one-letter code: D-aminoacyl-tRNA deacylase (148 aa).

Residues 137 to 138 (GP) carry the Gly-cisPro motif, important for rejection of L-amino acids motif.

Belongs to the DTD family. As to quaternary structure, homodimer.

It localises to the cytoplasm. The catalysed reaction is glycyl-tRNA(Ala) + H2O = tRNA(Ala) + glycine + H(+). It carries out the reaction a D-aminoacyl-tRNA + H2O = a tRNA + a D-alpha-amino acid + H(+). In terms of biological role, an aminoacyl-tRNA editing enzyme that deacylates mischarged D-aminoacyl-tRNAs. Also deacylates mischarged glycyl-tRNA(Ala), protecting cells against glycine mischarging by AlaRS. Acts via tRNA-based rather than protein-based catalysis; rejects L-amino acids rather than detecting D-amino acids in the active site. By recycling D-aminoacyl-tRNA to D-amino acids and free tRNA molecules, this enzyme counteracts the toxicity associated with the formation of D-aminoacyl-tRNA entities in vivo and helps enforce protein L-homochirality. This chain is D-aminoacyl-tRNA deacylase, found in Lactiplantibacillus plantarum (strain ATCC BAA-793 / NCIMB 8826 / WCFS1) (Lactobacillus plantarum).